We begin with the raw amino-acid sequence, 229 residues long: Potassium/proton antiporter CemA (229 aa).

4 helical membrane passes run 7–27, 107–127, 154–174, and 189–209; these read FIPL…SFTF, ILHF…SILG, ILLL…ELVI, and IISG…KYWI.

The protein belongs to the CemA family.

Its subcellular location is the plastid. The protein resides in the chloroplast inner membrane. It carries out the reaction K(+)(in) + H(+)(out) = K(+)(out) + H(+)(in). In terms of biological role, contributes to K(+)/H(+) antiport activity by supporting proton efflux to control proton extrusion and homeostasis in chloroplasts in a light-dependent manner to modulate photosynthesis. Prevents excessive induction of non-photochemical quenching (NPQ) under continuous-light conditions. Indirectly promotes efficient inorganic carbon uptake into chloroplasts. This is Potassium/proton antiporter CemA from Glycine max (Soybean).